Here is a 226-residue protein sequence, read N- to C-terminus: Cysteine and histidine-rich domain-containing protein RAR1 (226 aa).

8 residues coordinate Zn(2+): Cys12, Cys17, Cys31, His34, Cys49, Cys50, Cys66, and His71. The 60-residue stretch at 12–71 folds into the CHORD 1 domain; that stretch reads CQRIGCNAMFTDDDNPQGSCQFHASGPFFHDGMKEWSCCKQRSHDFSLFLEIPGCKTGKH. The CCCH signature appears at 104–124; the sequence is CSRCRQGFFCSDHGSQPKEQI. The Zn(2+) site is built by Cys159, Cys164, Cys178, His181, Cys196, Cys197, Cys213, and His218. Residues 159–218 enclose the CHORD 2 domain; the sequence is CKNKGCGQTFKERDNHETACSHHPGPAVFHDRLRGWKCCDVHVKEFDEFMEIPPCTKGWH.

In terms of assembly, interacts with HSP90-1, HSP90-2, SGT1A and SGT1B. Forms a ternary complex with SGT1A and barley HSP90.

Its function is as follows. Required specifically for plant innate immunity. Is essential for resistance conferred by multiple R genes recognizing different bacterial and oomycete pathogen isolates like avirulent P.syringae or H.parasitica (downy mildew). Contributes additively with SGT1B to RPP5-dependent resistance. Functions as a positive regulator of RPS5 accumulation by assisting its stabilization. May function as co-chaperone of HSP90-2 to positively regulate the steady-state accumulation of RPM1 and protect it from SGT1-mediated degradation. Acts as a negative regulator of pathogen-associated molecular pattern (PAMP)-triggered immunity. This Arabidopsis thaliana (Mouse-ear cress) protein is Cysteine and histidine-rich domain-containing protein RAR1 (RAR1).